Reading from the N-terminus, the 670-residue chain is Lebercilin-like protein (670 aa).

Positions 24-44 (RRSAECKRSPGTGDFSRNSNA) are disordered. Coiled coils occupy residues 148 to 259 (LHKI…EREE) and 305 to 336 (AAQTATKTLQVEVKHLQQKLKEKDRELEIKNI). The interval 351–402 (YPKVSSTKSVQADRKSLPFTSMRHQGTQKSDVAPLTTKGKKATGNMDRKEKS) is disordered. Polar residues predominate over residues 368-380 (PFTSMRHQGTQKS). The stretch at 420–440 (EDSKTKYEDLSREEKHLEVQV) forms a coiled coil. Disordered regions lie at residues 495 to 520 (RSMQRNGMDDTPDKCTAPYTKGPLRQ), 533 to 594 (LHHG…FRDK), and 606 to 647 (GYVL…AFGD). Over residues 546–558 (AGNTKYSHSTSKH) the composition is skewed to polar residues. Composition is skewed to basic and acidic residues over residues 560–572 (SNREEMELEHSDS), 585–594 (KAKDTTFRDK), and 621–632 (GSEEPLQSKESH). Positions 637–647 (SQASASNAFGD) are enriched in polar residues.

Belongs to the LCA5 family.

This is Lebercilin-like protein from Papio anubis (Olive baboon).